The chain runs to 238 residues: tRNA (guanine-N(7)-)-methyltransferase (238 aa).

Residues Glu68, Glu93, Asp120, and Asp143 each contribute to the S-adenosyl-L-methionine site. Asp143 is an active-site residue. Residues Lys147, Asp179, and 216 to 219 (TKFE) each bind substrate.

Belongs to the class I-like SAM-binding methyltransferase superfamily. TrmB family.

The enzyme catalyses guanosine(46) in tRNA + S-adenosyl-L-methionine = N(7)-methylguanosine(46) in tRNA + S-adenosyl-L-homocysteine. It functions in the pathway tRNA modification; N(7)-methylguanine-tRNA biosynthesis. Its function is as follows. Catalyzes the formation of N(7)-methylguanine at position 46 (m7G46) in tRNA. The protein is tRNA (guanine-N(7)-)-methyltransferase of Shewanella oneidensis (strain ATCC 700550 / JCM 31522 / CIP 106686 / LMG 19005 / NCIMB 14063 / MR-1).